We begin with the raw amino-acid sequence, 418 residues long: Delta(14)-sterol reductase TM7SF2 (418 aa).

6 helical membrane-spanning segments follow: residues 13-35 (FGGP…HLLL), 62-81 (ALLL…LLPA), 102-124 (GFQA…LPLG), 129-148 (MLLP…SLLL), 255-277 (FGFM…QAQF), and 287-304 (LPMA…YYIF). Residues K311, R315, L338, W343, and 350 to 351 (NY) each bind NADP(+). Residues 355–377 (LIMALAWSLPCGLSHLLPYFYVL) traverse the membrane as a helical segment. NADP(+) contacts are provided by residues D390, 394–398 (CLQKY), and Y405.

It belongs to the ERG4/ERG24 family. Strongly expressed in liver, weaker in ovary, testis, kidney and brain.

It is found in the endoplasmic reticulum membrane. Its subcellular location is the microsome membrane. The enzyme catalyses 4,4-dimethyl-5alpha-cholesta-8,24-dien-3beta-ol + NADP(+) = 4,4-dimethyl-5alpha-cholesta-8,14,24-trien-3beta-ol + NADPH + H(+). It catalyses the reaction 5alpha-cholest-8,14-dien-3beta-ol + NADPH + H(+) = 5alpha-cholest-8-en-3beta-ol + NADP(+). It carries out the reaction 4,4-dimethyl-8,14-cholestadien-3beta-ol + NADPH + H(+) = 4,4-dimethyl-5alpha-cholest-8-en-3beta-ol + NADP(+). It participates in steroid biosynthesis; cholesterol biosynthesis. Functionally, catalyzes the reduction of the C14-unsaturated bond of lanosterol, as part of the metabolic pathway leading to cholesterol biosynthesis. This chain is Delta(14)-sterol reductase TM7SF2 (Tm7sf2), found in Mus musculus (Mouse).